The primary structure comprises 174 residues: Variant surface antigen F (174 aa).

An N-terminal signal peptide occupies residues 1 to 29; it reads MKKSIFSKKLLFSFGSLVALAAIPLITIS. Cysteine 30 carries N-palmitoyl cysteine lipidation. Cysteine 30 carries the S-diacylglycerol cysteine lipid modification. Residues 32–174 form a disordered region; sequence QTNTDQSQQP…PEQGNSQVSK (143 aa). Positions 43–53 are enriched in gly residues; sequence SGSGSGSGTSN. A run of 9 repeats spans residues 55–67, 68–80, 81–93, 94–106, 107–119, 120–132, 133–145, 146–158, and 159–171. A 9 X 13 AA tandem repeats region spans residues 55 to 171; that stretch reads SGSTPTPEQG…TPTPEQGNSQ (117 aa). Residues 62–174 show a composition bias toward polar residues; sequence EQGNNQGGST…PEQGNSQVSK (113 aa).

The protein localises to the cell membrane. Functionally, responsible for the antigenic diversity for host adaptation. Expression in E.coli of a construct containing vlpD, vlpE, and vlpF yields antigenically distinguishable products corresponding to each gene. This is Variant surface antigen F (vlpF) from Mesomycoplasma hyorhinis (Mycoplasma hyorhinis).